The primary structure comprises 154 residues: Large ribosomal subunit protein uL23y (154 aa).

It belongs to the universal ribosomal protein uL23 family.

Functionally, binds to a specific region on the 26S rRNA. The chain is Large ribosomal subunit protein uL23y (RPL23AB) from Arabidopsis thaliana (Mouse-ear cress).